Reading from the N-terminus, the 208-residue chain is Na(+)-translocating NADH-quinone reductase subunit D (208 aa).

Transmembrane regions (helical) follow at residues isoleucine 42–valine 62, isoleucine 72–alanine 92, valine 103–methionine 123, leucine 131–valine 151, and asparagine 178–leucine 198.

It belongs to the NqrDE/RnfAE family. As to quaternary structure, composed of six subunits; NqrA, NqrB, NqrC, NqrD, NqrE and NqrF.

It is found in the cell inner membrane. It carries out the reaction a ubiquinone + n Na(+)(in) + NADH + H(+) = a ubiquinol + n Na(+)(out) + NAD(+). Functionally, NQR complex catalyzes the reduction of ubiquinone-1 to ubiquinol by two successive reactions, coupled with the transport of Na(+) ions from the cytoplasm to the periplasm. NqrA to NqrE are probably involved in the second step, the conversion of ubisemiquinone to ubiquinol. This chain is Na(+)-translocating NADH-quinone reductase subunit D, found in Neisseria gonorrhoeae (strain ATCC 700825 / FA 1090).